Here is a 474-residue protein sequence, read N- to C-terminus: tRNA-2-methylthio-N(6)-dimethylallyladenosine synthase (474 aa).

Positions 3-120 (KKLLIKTWGC…LPEMIKQSQS (118 aa)) constitute an MTTase N-terminal domain. 6 residues coordinate [4Fe-4S] cluster: cysteine 12, cysteine 49, cysteine 83, cysteine 157, cysteine 161, and cysteine 164. The Radical SAM core domain maps to 143 to 375 (RAEGATAFVS…QQTVNTQAMR (233 aa)). The TRAM domain occupies 378–441 (RQMLDTEQRV…ANSLRGELVR (64 aa)).

Belongs to the methylthiotransferase family. MiaB subfamily. Monomer. It depends on [4Fe-4S] cluster as a cofactor.

It localises to the cytoplasm. The enzyme catalyses N(6)-dimethylallyladenosine(37) in tRNA + (sulfur carrier)-SH + AH2 + 2 S-adenosyl-L-methionine = 2-methylsulfanyl-N(6)-dimethylallyladenosine(37) in tRNA + (sulfur carrier)-H + 5'-deoxyadenosine + L-methionine + A + S-adenosyl-L-homocysteine + 2 H(+). Catalyzes the methylthiolation of N6-(dimethylallyl)adenosine (i(6)A), leading to the formation of 2-methylthio-N6-(dimethylallyl)adenosine (ms(2)i(6)A) at position 37 in tRNAs that read codons beginning with uridine. The polypeptide is tRNA-2-methylthio-N(6)-dimethylallyladenosine synthase (Vibrio campbellii (strain ATCC BAA-1116)).